The chain runs to 95 residues: Aspartyl/glutamyl-tRNA(Asn/Gln) amidotransferase subunit C (95 aa).

This sequence belongs to the GatC family. Heterotrimer of A, B and C subunits.

It carries out the reaction L-glutamyl-tRNA(Gln) + L-glutamine + ATP + H2O = L-glutaminyl-tRNA(Gln) + L-glutamate + ADP + phosphate + H(+). It catalyses the reaction L-aspartyl-tRNA(Asn) + L-glutamine + ATP + H2O = L-asparaginyl-tRNA(Asn) + L-glutamate + ADP + phosphate + 2 H(+). Allows the formation of correctly charged Asn-tRNA(Asn) or Gln-tRNA(Gln) through the transamidation of misacylated Asp-tRNA(Asn) or Glu-tRNA(Gln) in organisms which lack either or both of asparaginyl-tRNA or glutaminyl-tRNA synthetases. The reaction takes place in the presence of glutamine and ATP through an activated phospho-Asp-tRNA(Asn) or phospho-Glu-tRNA(Gln). The polypeptide is Aspartyl/glutamyl-tRNA(Asn/Gln) amidotransferase subunit C (Clostridium botulinum (strain Loch Maree / Type A3)).